Consider the following 105-residue polypeptide: MMIPTEKIRIRLKAYDHKLLDQSTSEIVETARRTGSAVVGPIPLPTSINKFCVLRSPHVNKKSREQFEMRTHRRLLDILEPTQQTIDLLMKLELSAGVDVEIKLP.

It belongs to the universal ribosomal protein uS10 family. As to quaternary structure, part of the 30S ribosomal subunit.

In terms of biological role, involved in the binding of tRNA to the ribosomes. This chain is Small ribosomal subunit protein uS10, found in Desulfotalea psychrophila (strain LSv54 / DSM 12343).